The primary structure comprises 555 residues: Beta-caryophyllene synthase (555 aa).

Positions 313, 317, 456, and 464 each coordinate Mg(2+). The DDXXD motif motif lies at 313 to 317 (DDIYD).

The protein belongs to the terpene synthase family. Mg(2+) is required as a cofactor.

It carries out the reaction (2E,6E)-farnesyl diphosphate = (+)-(E)-beta-caryophyllene + diphosphate. It functions in the pathway secondary metabolite biosynthesis; terpenoid biosynthesis. Its function is as follows. Sesquiterpene synthase converting farnesyl diphosphate to beta-caryophyllene as the major product. The chain is Beta-caryophyllene synthase from Phyla dulcis (Aztec sweet herb).